A 201-amino-acid chain; its full sequence is Acyl-homoserine-lactone synthase (201 aa).

This sequence belongs to the autoinducer synthase family.

It catalyses the reaction a fatty acyl-[ACP] + S-adenosyl-L-methionine = an N-acyl-L-homoserine lactone + S-methyl-5'-thioadenosine + holo-[ACP] + H(+). Its function is as follows. Required for the synthesis of PAI consisting of 3-oxo-N-(tetrahydro-2-oxo-3-furanyl)-dodecanamide also known as N-(3-oxododecanoyl)homoserine lactone, an autoinducer molecule which binds to LasR and thus acts in elastase biosynthesis regulation. The polypeptide is Acyl-homoserine-lactone synthase (lasI) (Pseudomonas aeruginosa (strain ATCC 15692 / DSM 22644 / CIP 104116 / JCM 14847 / LMG 12228 / 1C / PRS 101 / PAO1)).